Here is a 325-residue protein sequence, read N- to C-terminus: Homoserine O-succinyltransferase (325 aa).

The active-site Acyl-thioester intermediate is the C142. Residues K163 and S191 each contribute to the substrate site. Catalysis depends on H234, which acts as the Proton acceptor. Residue E236 is part of the active site. A substrate-binding site is contributed by R248.

This sequence belongs to the MetA family.

The protein resides in the cytoplasm. The catalysed reaction is L-homoserine + succinyl-CoA = O-succinyl-L-homoserine + CoA. The protein operates within amino-acid biosynthesis; L-methionine biosynthesis via de novo pathway; O-succinyl-L-homoserine from L-homoserine: step 1/1. Its function is as follows. Transfers a succinyl group from succinyl-CoA to L-homoserine, forming succinyl-L-homoserine. In Bradyrhizobium japonicum, this protein is Homoserine O-succinyltransferase.